The primary structure comprises 298 residues: Glycine--tRNA ligase alpha subunit (298 aa).

This sequence belongs to the class-II aminoacyl-tRNA synthetase family. As to quaternary structure, tetramer of two alpha and two beta subunits.

It is found in the cytoplasm. It catalyses the reaction tRNA(Gly) + glycine + ATP = glycyl-tRNA(Gly) + AMP + diphosphate. The protein is Glycine--tRNA ligase alpha subunit of Helicobacter hepaticus (strain ATCC 51449 / 3B1).